The primary structure comprises 311 residues: N-acetylmuramic acid 6-phosphate etherase (311 aa).

In terms of domain architecture, SIS spans 64 to 227; that stretch reads IYQRLIDNGR…SSGVMIKLGK (164 aa). The Proton donor role is filled by E92. E123 is an active-site residue.

Belongs to the GCKR-like family. MurNAc-6-P etherase subfamily. Homodimer.

The catalysed reaction is N-acetyl-D-muramate 6-phosphate + H2O = N-acetyl-D-glucosamine 6-phosphate + (R)-lactate. It functions in the pathway amino-sugar metabolism; N-acetylmuramate degradation. Its function is as follows. Specifically catalyzes the cleavage of the D-lactyl ether substituent of MurNAc 6-phosphate, producing GlcNAc 6-phosphate and D-lactate. The protein is N-acetylmuramic acid 6-phosphate etherase of Prochlorococcus marinus (strain SARG / CCMP1375 / SS120).